A 219-amino-acid polypeptide reads, in one-letter code: Cytidylate kinase (219 aa).

10 to 18 (GPAAAGKST) is a binding site for ATP.

This sequence belongs to the cytidylate kinase family. Type 1 subfamily.

The protein localises to the cytoplasm. It carries out the reaction CMP + ATP = CDP + ADP. The catalysed reaction is dCMP + ATP = dCDP + ADP. The protein is Cytidylate kinase of Staphylococcus aureus (strain bovine RF122 / ET3-1).